A 476-amino-acid chain; its full sequence is Lactate utilization protein B (476 aa).

4Fe-4S ferredoxin-type domains are found at residues 304–334 (GGEF…GHTY) and 353–382 (YDDF…LHQL). [4Fe-4S] cluster is bound by residues Cys313, Cys316, Cys319, Cys323, Cys366, Cys369, and Cys373. Residues 452–476 (RDFPAPNKNSFRNWMKHRTKGDEES) form a disordered region.

The protein belongs to the LutB/YkgF family.

Functionally, is involved in L-lactate degradation and allows cells to grow with lactate as the sole carbon source. Has probably a role as an electron transporter during oxidation of L-lactate. The chain is Lactate utilization protein B from Lysinibacillus sphaericus (strain C3-41).